Here is a 194-residue protein sequence, read N- to C-terminus: A-type ATP synthase subunit E (194 aa).

Belongs to the V-ATPase E subunit family. As to quaternary structure, has multiple subunits with at least A(3), B(3), C, D, E, F, H, I and proteolipid K(x).

It is found in the cell membrane. Its function is as follows. Component of the A-type ATP synthase that produces ATP from ADP in the presence of a proton gradient across the membrane. The protein is A-type ATP synthase subunit E of Saccharolobus islandicus (strain Y.N.15.51 / Yellowstone #2) (Sulfolobus islandicus).